Here is a 204-residue protein sequence, read N- to C-terminus: MISEYVDEEIKRREDYSLRRLKGIPNDRRLWILTCMDERVHVEEALGIRPEDAHIYRNAGGIVTDDAIRSASLTTNFFGTKEIIVITHTDCGMIRFTGDEVAKYFLDKGVKVNELQIDPLLPSLRLQSTEDFTKWFKFFRDLGANSPDDIALKNAEILKNHPLIPKNVTISAYVYEVETHKLRKPHQRLYELTSRFEHGTVVKE.

The Zn(2+) site is built by cysteine 35, histidine 88, and cysteine 91.

The protein belongs to the beta-class carbonic anhydrase family. As to quaternary structure, forms a hexadecameric catenane homooligomer, through interactions of two interlocked octameric rings. Zn(2+) is required as a cofactor.

The enzyme catalyses carbon disulfide + 2 H2O = 2 hydrogen sulfide + CO2 + 2 H(+). Its pathway is sulfur metabolism; hydrogen sulfide biosynthesis. Its function is as follows. Catalyzes the conversion of carbon disulfide into hydrogen sulfide and carbon dioxide, with carbonyl sulfide as an intermediate. Likely plays a key role in sulfur metabolism in S.solfataricus. Does not show carbonic anhydrase activity (hydration of CO(2) to carbonate). This chain is Carbon disulfide hydrolase, found in Saccharolobus solfataricus (strain ATCC 35092 / DSM 1617 / JCM 11322 / P2) (Sulfolobus solfataricus).